A 182-amino-acid chain; its full sequence is Large ribosomal subunit protein uL5 (182 aa).

It belongs to the universal ribosomal protein uL5 family. Part of the 50S ribosomal subunit; part of the 5S rRNA/L5/L18/L25 subcomplex. Contacts the 5S rRNA and the P site tRNA. Forms a bridge to the 30S subunit in the 70S ribosome.

In terms of biological role, this is one of the proteins that bind and probably mediate the attachment of the 5S RNA into the large ribosomal subunit, where it forms part of the central protuberance. In the 70S ribosome it contacts protein S13 of the 30S subunit (bridge B1b), connecting the 2 subunits; this bridge is implicated in subunit movement. Contacts the P site tRNA; the 5S rRNA and some of its associated proteins might help stabilize positioning of ribosome-bound tRNAs. This is Large ribosomal subunit protein uL5 from Thermosipho melanesiensis (strain DSM 12029 / CIP 104789 / BI429).